The following is a 96-amino-acid chain: Putative pterin-4-alpha-carbinolamine dehydratase (96 aa).

This sequence belongs to the pterin-4-alpha-carbinolamine dehydratase family.

It carries out the reaction (4aS,6R)-4a-hydroxy-L-erythro-5,6,7,8-tetrahydrobiopterin = (6R)-L-erythro-6,7-dihydrobiopterin + H2O. The chain is Putative pterin-4-alpha-carbinolamine dehydratase from Prochlorococcus marinus (strain MIT 9313).